The sequence spans 1311 residues: Zinc finger protein 521 (1311 aa).

Basic residues predominate over residues 1 to 10 (MSRRKQAKPR). The tract at residues 1–37 (MSRRKQAKPRSLKDPNCKLEDKTEDGEALDCKKRPED) is disordered. Positions 11 to 21 (SLKDPNCKLED) are enriched in basic and acidic residues. Residues 47 to 67 (HSCDSCLQVFESLSDITEHKI) form a C2H2-type 1; degenerate zinc finger. The disordered stretch occupies residues 81–108 (DPTCSWPASSPSSKDQTSPSHGEGCDFG). The segment covering 87-102 (PASSPSSKDQTSPSHG) has biased composition (low complexity). 7 consecutive C2H2-type zinc fingers follow at residues 118–140 (YPCQ…EQSH), 146–168 (FKCT…IKLH), 174–196 (YHCS…LKTH), 202–224 (YKCA…MQVH), 246–269 (QKCS…AECH), 281–304 (LQCV…EQVH), and 310–332 (NSCS…MDSH). Over residues 349 to 358 (VGYTSVSSTT) the composition is skewed to low complexity. The disordered stretch occupies residues 349 to 397 (VGYTSVSSTTPDSNLSVDSSTMVEAAPPIPKSRGRKRAAQQTPDMTGPS). Composition is skewed to polar residues over residues 359 to 370 (PDSNLSVDSSTM) and 387 to 397 (AQQTPDMTGPS). The segment at 405-429 (YSCIYCNKQLFSSLAVLQIHLKTMH) adopts a C2H2-type 9; degenerate zinc-finger fold. C2H2-type zinc fingers lie at residues 437 to 460 (HICQ…KQVH), 477 to 500 (YQCN…RCSH), and 513 to 536 (FFCP…RQVH). Position 546 is a phosphoserine (S546). The C2H2-type 13; atypical zinc finger occupies 560 to 585 (YSCSYCTNSPIFNSVLKLNKHIKENH). Phosphoserine is present on residues S605 and S608. 7 C2H2-type zinc fingers span residues 634-656 (YICN…LKTH), 664-686 (LTCP…VTIH), 694-717 (YICE…LDMH), 722-745 (FRCT…AVKH), 752-775 (YRCT…KHNH), 783-805 (HKCI…ITTH), and 809-832 (YNCK…REKH). The tract at residues 863-882 (TNSQESHNSHDGSEEDVDTS) is disordered. The C2H2-type 21; degenerate zinc finger occupies 886–908 (YGCDICGAAYTMETLLQNHQLRD). C2H2-type zinc fingers lie at residues 930–952 (YKCN…MQTH), 959–981 (YMCP…KVTH), and 1020–1042 (FRCV…GTFH). Residues 1065–1083 (YKCASCLKEFRSKQDLVKL) form a C2H2-type 25; degenerate zinc finger. A C2H2-type 26 zinc finger spans residues 1138 to 1161 (TRCSSCNVKFESESELQNHIQTIH). Residue K1146 forms a Glycyl lysine isopeptide (Lys-Gly) (interchain with G-Cter in SUMO2) linkage. Residues 1168-1178 (SNSTQLKTPQV) are compositionally biased toward polar residues. The tract at residues 1168-1188 (SNSTQLKTPQVSPMPRISPSQ) is disordered. 4 C2H2-type zinc fingers span residues 1195–1217 (YQCI…VANH), 1225–1247 (HECK…LIEH), 1256–1279 (FKCP…FSAH), and 1286–1309 (YDCT…MTQH).

This sequence belongs to the krueppel C2H2-type zinc-finger protein family. In terms of assembly, interacts with EBF1. Interacts with SMAD1 and SMAD4. As to expression, predominantly expressed in hematopoietic cells. Present in organs and tissues that contain stem and progenitor cells, myeloid and/or lymphoid: placenta, spleen, lymph nodes, thymus, bone marrow and fetal liver. Within the hematopoietic system, it is abundant in CD34(+) cells but undetectable in mature peripheral blood leukocytes, and its levels rapidly decrease during the differentiation of CD34(+) cells in response to hemopoietins.

It is found in the nucleus. In terms of biological role, transcription factor that can both act as an activator or a repressor depending on the context. Involved in BMP signaling and in the regulation of the immature compartment of the hematopoietic system. Associates with SMADs in response to BMP2 leading to activate transcription of BMP target genes. Acts as a transcriptional repressor via its interaction with EBF1, a transcription factor involved specification of B-cell lineage; this interaction preventing EBF1 to bind DNA and activate target genes. In Homo sapiens (Human), this protein is Zinc finger protein 521 (ZNF521).